A 636-amino-acid polypeptide reads, in one-letter code: NADP-dependent malic enzyme, chloroplastic (636 aa).

The interval 1–28 (MLSTRTAAVAASASPASPWKLGGRSEGG) is disordered. The transit peptide at 1 to 62 (MLSTRTAAVA…LPPRRVDAVA (62 aa)) directs the protein to the chloroplast. Residues 7–18 (AAVAASASPASP) are compositionally biased toward low complexity. The active-site Proton donor is the tyrosine 184. Arginine 237 contributes to the NAD(+) binding site. The Proton acceptor role is filled by lysine 255. Residues glutamate 327, aspartate 328, and aspartate 351 each contribute to the a divalent metal cation site. Aspartate 351 provides a ligand contact to NAD(+). 380–396 (LFLGAGEAGTGIAELIA) contributes to the NADP(+) binding site. An NAD(+)-binding site is contributed by asparagine 492.

The protein belongs to the malic enzymes family. In terms of assembly, homotetramer. It depends on Mg(2+) as a cofactor. Mn(2+) serves as cofactor.

The protein localises to the plastid. It localises to the chloroplast. The enzyme catalyses (S)-malate + NADP(+) = pyruvate + CO2 + NADPH. It catalyses the reaction oxaloacetate + H(+) = pyruvate + CO2. It participates in photosynthesis; C4 acid pathway. Functionally, the chloroplastic ME isoform decarboxylates malate shuttled from neighboring mesophyll cells. The CO(2) released is then refixed by ribulose-bisphosphate carboxylase. This pathway eliminates the photorespiratory loss of CO(2) that occurs in most plants. This is NADP-dependent malic enzyme, chloroplastic (MOD1) from Zea mays (Maize).